Consider the following 96-residue polypeptide: Small ribosomal subunit protein bS18 (96 aa).

A compositionally biased stretch (basic residues) spans Met1–Arg18. The tract at residues Met1–Gln21 is disordered.

This sequence belongs to the bacterial ribosomal protein bS18 family. Part of the 30S ribosomal subunit. Forms a tight heterodimer with protein bS6.

Its function is as follows. Binds as a heterodimer with protein bS6 to the central domain of the 16S rRNA, where it helps stabilize the platform of the 30S subunit. The sequence is that of Small ribosomal subunit protein bS18 from Methylibium petroleiphilum (strain ATCC BAA-1232 / LMG 22953 / PM1).